The chain runs to 79 residues: Defensin-1 (79 aa).

Positions Met1–Ala23 are cleaved as a signal peptide. Intrachain disulfides connect Cys42-Cys69, Cys55-Cys75, and Cys59-Cys77.

The protein belongs to the invertebrate defensin family. Type 1 subfamily.

The protein resides in the secreted. The chain is Defensin-1 (SMD1) from Stomoxys calcitrans (Stable fly).